The following is an 84-amino-acid chain: Putative membrane protein insertion efficiency factor (84 aa).

Residues 63-84 (GEDPVPNHFTLRRNKKEKPSKS) are disordered.

This sequence belongs to the UPF0161 family.

The protein resides in the cell membrane. In terms of biological role, could be involved in insertion of integral membrane proteins into the membrane. The sequence is that of Putative membrane protein insertion efficiency factor from Streptococcus mutans serotype c (strain ATCC 700610 / UA159).